Here is a 101-residue protein sequence, read N- to C-terminus: RNA-binding protein Hfq (101 aa).

The 60-residue stretch at 9 to 68 folds into the Sm domain; that stretch reads DPFLNALRRERVPVSIYLVNGIKLQGQIESFDQFVILLKNTVSQMVYKHAISTVVPSRPV. A disordered region spans residues 63-101; that stretch reads VPSRPVSHHNNNPSGGSSNYHHGSTPASQPSQPESDDAE. The span at 70–86 shows a compositional bias: low complexity; that stretch reads HHNNNPSGGSSNYHHGS.

This sequence belongs to the Hfq family. In terms of assembly, homohexamer.

RNA chaperone that binds small regulatory RNA (sRNAs) and mRNAs to facilitate mRNA translational regulation in response to envelope stress, environmental stress and changes in metabolite concentrations. Also binds with high specificity to tRNAs. The chain is RNA-binding protein Hfq from Sodalis glossinidius (strain morsitans).